Consider the following 806-residue polypeptide: Leucine--tRNA ligase (806 aa).

The short motif at 38–48 (PYPSGEIHMGH) is the 'HIGH' region element. A 'KMSKS' region motif is present at residues 572-576 (KMSKS). K575 provides a ligand contact to ATP.

The protein belongs to the class-I aminoacyl-tRNA synthetase family.

The protein resides in the cytoplasm. The catalysed reaction is tRNA(Leu) + L-leucine + ATP = L-leucyl-tRNA(Leu) + AMP + diphosphate. The sequence is that of Leucine--tRNA ligase from Helicobacter pylori (strain HPAG1).